A 234-amino-acid polypeptide reads, in one-letter code: Probable cyclic nucleotide phosphodiesterase Rmag_0669 (234 aa).

Positions 11, 13, 49, 79, 145, 184, and 186 each coordinate Fe cation. AMP contacts are provided by residues histidine 13, aspartate 49, and 79–80; that span reads NH. Histidine 186 contacts AMP.

This sequence belongs to the cyclic nucleotide phosphodiesterase class-III family. The cofactor is Fe(2+).

This is Probable cyclic nucleotide phosphodiesterase Rmag_0669 from Ruthia magnifica subsp. Calyptogena magnifica.